We begin with the raw amino-acid sequence, 252 residues long: 4-hydroxy-tetrahydrodipicolinate reductase (252 aa).

Residues 8-13, 84-86, and 108-111 contribute to the NAD(+) site; these read GCCGKM, CST, and SANM. Residue histidine 141 is the Proton donor/acceptor of the active site. (S)-2,3,4,5-tetrahydrodipicolinate is bound at residue histidine 142. Residue lysine 145 is the Proton donor of the active site. 151-152 provides a ligand contact to (S)-2,3,4,5-tetrahydrodipicolinate; it reads GT.

Belongs to the DapB family.

Its subcellular location is the cytoplasm. It catalyses the reaction (S)-2,3,4,5-tetrahydrodipicolinate + NAD(+) + H2O = (2S,4S)-4-hydroxy-2,3,4,5-tetrahydrodipicolinate + NADH + H(+). The enzyme catalyses (S)-2,3,4,5-tetrahydrodipicolinate + NADP(+) + H2O = (2S,4S)-4-hydroxy-2,3,4,5-tetrahydrodipicolinate + NADPH + H(+). It participates in amino-acid biosynthesis; L-lysine biosynthesis via DAP pathway; (S)-tetrahydrodipicolinate from L-aspartate: step 4/4. Functionally, catalyzes the conversion of 4-hydroxy-tetrahydrodipicolinate (HTPA) to tetrahydrodipicolinate. This Clostridium botulinum (strain Eklund 17B / Type B) protein is 4-hydroxy-tetrahydrodipicolinate reductase.